A 247-amino-acid chain; its full sequence is Uridylate kinase (247 aa).

18–21 (KLSG) is an ATP binding site. A UMP-binding site is contributed by Gly-60. Positions 61 and 65 each coordinate ATP. Residues Asp-80 and 141-148 (TGNPFFTT) contribute to the UMP site. ATP contacts are provided by Thr-168, Tyr-174, and Asp-177.

Belongs to the UMP kinase family. In terms of assembly, homohexamer.

The protein localises to the cytoplasm. The catalysed reaction is UMP + ATP = UDP + ADP. Its pathway is pyrimidine metabolism; CTP biosynthesis via de novo pathway; UDP from UMP (UMPK route): step 1/1. Inhibited by UTP. Catalyzes the reversible phosphorylation of UMP to UDP. This is Uridylate kinase from Pseudomonas putida (strain ATCC 47054 / DSM 6125 / CFBP 8728 / NCIMB 11950 / KT2440).